We begin with the raw amino-acid sequence, 276 residues long: Undecaprenyl-diphosphatase 1 (276 aa).

7 helical membrane passes run 4–24, 45–62, 83–103, 108–128, 187–207, 217–237, and 252–272; these read ILICKALILGVVEGLTEFLPV, KTFDVVIQFGAILAVCWE, FTLNVVIATIPAIALGLLFEK, VLFSPVPVAFALVVGGAIILW, VATEFSFFLAIPIIFGATLYE, VDSLGLFALGLVAAFVSAFVC, and VFAWYRIAFGLFVLLVGYSGW.

Belongs to the UppP family.

Its subcellular location is the cell inner membrane. It carries out the reaction di-trans,octa-cis-undecaprenyl diphosphate + H2O = di-trans,octa-cis-undecaprenyl phosphate + phosphate + H(+). Functionally, catalyzes the dephosphorylation of undecaprenyl diphosphate (UPP). Confers resistance to bacitracin. In Burkholderia ambifaria (strain ATCC BAA-244 / DSM 16087 / CCUG 44356 / LMG 19182 / AMMD) (Burkholderia cepacia (strain AMMD)), this protein is Undecaprenyl-diphosphatase 1.